Reading from the N-terminus, the 330-residue chain is Putative [LysW]-L-2-aminoadipate/[LysW]-L-glutamate phosphate reductase (330 aa).

10-13 provides a ligand contact to NADP(+); it reads SGYI. The active site involves cysteine 142. Asparagine 297 provides a ligand contact to NADP(+).

This sequence belongs to the NAGSA dehydrogenase family. Type 1 subfamily. LysY sub-subfamily.

The protein localises to the cytoplasm. The enzyme catalyses [amino-group carrier protein]-C-terminal-N-(1-carboxy-5-oxopentan-1-yl)-L-glutamine + phosphate + NADP(+) = [amino-group carrier protein]-C-terminal-N-(1-carboxy-5-phosphooxy-5-oxopentan-1-yl)-L-glutamine + NADPH + H(+). It carries out the reaction [amino-group carrier protein]-C-terminal-gamma-(L-glutamyl-5-semialdehyde)-L-glutamate + phosphate + NADP(+) = [amino-group carrier protein]-C-terminal-gamma-(5-phospho-L-glutamyl)-L-glutamate + NADPH + H(+). It functions in the pathway amino-acid biosynthesis; L-lysine biosynthesis via AAA pathway; L-lysine from L-alpha-aminoadipate (Thermus route): step 3/5. Its pathway is amino-acid biosynthesis; L-arginine biosynthesis. In terms of biological role, involved in both the arginine and lysine biosynthetic pathways. The sequence is that of Putative [LysW]-L-2-aminoadipate/[LysW]-L-glutamate phosphate reductase from Pyrococcus horikoshii (strain ATCC 700860 / DSM 12428 / JCM 9974 / NBRC 100139 / OT-3).